A 192-amino-acid polypeptide reads, in one-letter code: Adenylate kinase (192 aa).

12–17 (GSGKTT) contacts ATP. The segment at 33-62 (STGDLLRAEVAKDSELGKKIDKIISGGNLV) is NMP. Residues T34, R39, 60-62 (NLV), 87-90 (GYPR), and Q94 contribute to the AMP site. The segment at 129–135 (GRARGAD) is LID. R130 serves as a coordination point for ATP. Residues R132 and R144 each coordinate AMP. R172 contacts ATP.

The protein belongs to the adenylate kinase family. In terms of assembly, monomer.

Its subcellular location is the cytoplasm. The catalysed reaction is AMP + ATP = 2 ADP. The protein operates within purine metabolism; AMP biosynthesis via salvage pathway; AMP from ADP: step 1/1. In terms of biological role, catalyzes the reversible transfer of the terminal phosphate group between ATP and AMP. Plays an important role in cellular energy homeostasis and in adenine nucleotide metabolism. The protein is Adenylate kinase of Campylobacter hominis (strain ATCC BAA-381 / DSM 21671 / CCUG 45161 / LMG 19568 / NCTC 13146 / CH001A).